The following is a 274-amino-acid chain: MAATMSEPRRVGFVGAGRMAEAIARGLIQAGKVEAKQVLASAPTDNNLCHFRALGCQTTHSNHEVLQNCPLVIFATKPQVLPTVLAEVAPIVTTEHIIVSVAAGISLSTMEGLLPPNTRVLRVSPNLPCVVQEGAMVMARGHHAGNDDAELLQNLLEACGQCIEVPESYVDIHTGLSGSGVAFVCTFSEALAEGAIKMGMPSGLAHRIAAQTLLGTAKMLQQEGKHPAQLRTDVLTPAGTTIHGLHALERGGFRAATMSAVEAATCRAKELSKK.

Ala-2 bears the N-acetylalanine mark.

It belongs to the pyrroline-5-carboxylate reductase family. As to quaternary structure, homodecamer; composed of 5 homodimers.

It is found in the cytoplasm. It carries out the reaction L-proline + NADP(+) = (S)-1-pyrroline-5-carboxylate + NADPH + 2 H(+). The catalysed reaction is L-proline + NAD(+) = (S)-1-pyrroline-5-carboxylate + NADH + 2 H(+). The protein operates within amino-acid biosynthesis; L-proline biosynthesis; L-proline from L-glutamate 5-semialdehyde: step 1/1. Its function is as follows. Oxidoreductase that catalyzes the last step in proline biosynthesis, which corresponds to the reduction of pyrroline-5-carboxylate (P5C) to L-proline using NAD(P)H. Proline is synthesized from either glutamate or ornithine; both are converted to P5C, and then to proline via pyrroline-5-carboxylate reductases (PYCRs). PYCR3 is exclusively linked to the biosynthesis of proline from ornithine. The chain is Pyrroline-5-carboxylate reductase 3 from Mus musculus (Mouse).